The sequence spans 118 residues: Basic phospholipase A2 PA-12A (118 aa).

Intrachain disulfides connect C11-C71, C27-C117, C29-C45, C44-C98, C51-C91, C60-C84, and C78-C89. Ca(2+) contacts are provided by Y28, G30, and G32. Residue H48 is part of the active site. Residue D49 participates in Ca(2+) binding. Residue D92 is part of the active site.

It belongs to the phospholipase A2 family. Group I subfamily. D49 sub-subfamily. Ca(2+) serves as cofactor. In terms of tissue distribution, expressed by the venom gland.

It localises to the secreted. The catalysed reaction is a 1,2-diacyl-sn-glycero-3-phosphocholine + H2O = a 1-acyl-sn-glycero-3-phosphocholine + a fatty acid + H(+). In terms of biological role, PLA2 catalyzes the calcium-dependent hydrolysis of the 2-acyl groups in 3-sn-phosphoglycerides. This is Basic phospholipase A2 PA-12A from Pseudechis australis (Mulga snake).